Consider the following 135-residue polypeptide: D-ribose pyranase (135 aa).

His-20 functions as the Proton donor in the catalytic mechanism. Residues Asp-28, His-102, and 124–126 (YSN) each bind substrate.

It belongs to the RbsD / FucU family. RbsD subfamily. In terms of assembly, homodecamer.

It is found in the cytoplasm. The enzyme catalyses beta-D-ribopyranose = beta-D-ribofuranose. The protein operates within carbohydrate metabolism; D-ribose degradation; D-ribose 5-phosphate from beta-D-ribopyranose: step 1/2. Catalyzes the interconversion of beta-pyran and beta-furan forms of D-ribose. The chain is D-ribose pyranase from Thermotoga petrophila (strain ATCC BAA-488 / DSM 13995 / JCM 10881 / RKU-1).